Consider the following 350-residue polypeptide: Neutral protease 2 homolog SNOG_10522 (350 aa).

Residues 1-18 (MKVSSQLAVAALASFATA) form the signal peptide. A propeptide spanning residues 19 to 180 (ASVDVHKRET…AKALNKRTAI (162 aa)) is cleaved from the precursor. 2 disulfides stabilise this stretch: cysteine 184/cysteine 251 and cysteine 258/cysteine 276. Residue histidine 301 participates in Zn(2+) binding. Glutamate 302 is a catalytic residue. The Zn(2+) site is built by histidine 305 and aspartate 316.

This sequence belongs to the peptidase M35 family. Requires Zn(2+) as cofactor.

It is found in the secreted. It catalyses the reaction Preferential cleavage of bonds with hydrophobic residues in P1'. Also 3-Asn-|-Gln-4 and 8-Gly-|-Ser-9 bonds in insulin B chain.. Its function is as follows. Secreted metalloproteinase that allows assimilation of proteinaceous substrates. Shows high activities on basic nuclear substrates such as histone and protamine. This is Neutral protease 2 homolog SNOG_10522 from Phaeosphaeria nodorum (strain SN15 / ATCC MYA-4574 / FGSC 10173) (Glume blotch fungus).